The primary structure comprises 1849 residues: Brefeldin A-inhibited guanine nucleotide-exchange protein 1 (1849 aa).

Residues Tyr-2–Arg-224 form a DCB; DCB:DCB and DCB:HUS domain interaction region. Basic and acidic residues predominate over residues Ala-46–Ala-58. Disordered stretches follow at residues Ala-46 to Leu-65, Glu-216 to Ala-301, and Ile-350 to Ala-413. Phosphoserine occurs at positions 52, 286, 289, and 290. Composition is skewed to polar residues over residues Ile-350–Thr-360 and Ser-394–Pro-409. Residues Ser-397 and Ser-410 each carry the phosphoserine modification. An HUS; DCB:HUS domain interaction region spans residues Ala-557 to Asn-577. Positions Pro-634–Asp-687 are disordered. Over residues Lys-644–Thr-658 the composition is skewed to basic and acidic residues. Positions Ser-664 to Ser-684 are enriched in low complexity. The 132-residue stretch at Phe-709 to Ser-840 folds into the SEC7 domain. A Nuclear localization signal (NLS) motif is present at residues Lys-711 to Arg-715. Phosphoserine is present on residues Ser-1079, Ser-1566, and Ser-1569.

As to quaternary structure, homodimer. Interacts with ARFGEF2/BIG2; both proteins are probably part of the same or very similar macromolecular complexes. Interacts with FKBP2. Interacts with MYO9B. Interacts with PRKAR1A and PRKAR2A. Interacts with PPP1CC. Interacts with NCL, FBL, NUP62 and U3 small nucleolar RNA. Interacts with DPY30. Interacts with PDE3A. Interacts with KANK1. Interacts with TBC1D22A and TBC1D22B. In terms of processing, phosphorylated. In vitro phosphorylated by PKA reducing its GEF activity and dephosphorylated by phosphatase PP1. Abundantly expressed in kidney, somewhat less abundant in lung, spleen, and brain, and still less abundant in heart.

The protein resides in the cytoplasm. It localises to the perinuclear region. Its subcellular location is the golgi apparatus. The protein localises to the trans-Golgi network. It is found in the nucleus. The protein resides in the nucleolus. It localises to the nucleus matrix. Its subcellular location is the membrane. Its activity is regulated as follows. Inhibited by brefeldin A. Functionally, promotes guanine-nucleotide exchange on ARF1 and ARF3. Promotes the activation of ARF1/ARF3 through replacement of GDP with GTP. Involved in vesicular trafficking. Required for the maintenance of Golgi structure; the function may be independent of its GEF activity. Required for the maturation of integrin beta-1 in the Golgi. Involved in the establishment and persistence of cell polarity during directed cell movement in wound healing. Proposed to act as A kinase-anchoring protein (AKAP) and may mediate crosstalk between Arf and PKA pathways. Inhibits GAP activity of MYO9B probably through competitive RhoA binding. The function in the nucleus remains to be determined. The sequence is that of Brefeldin A-inhibited guanine nucleotide-exchange protein 1 (ARFGEF1) from Bos taurus (Bovine).